The chain runs to 220 residues: Protein-L-isoaspartate O-methyltransferase (220 aa).

Serine 69 is an active-site residue.

It belongs to the methyltransferase superfamily. L-isoaspartyl/D-aspartyl protein methyltransferase family.

It is found in the cytoplasm. It carries out the reaction [protein]-L-isoaspartate + S-adenosyl-L-methionine = [protein]-L-isoaspartate alpha-methyl ester + S-adenosyl-L-homocysteine. Functionally, catalyzes the methyl esterification of L-isoaspartyl residues in peptides and proteins that result from spontaneous decomposition of normal L-aspartyl and L-asparaginyl residues. It plays a role in the repair and/or degradation of damaged proteins. This chain is Protein-L-isoaspartate O-methyltransferase, found in Alcanivorax borkumensis (strain ATCC 700651 / DSM 11573 / NCIMB 13689 / SK2).